Here is a 602-residue protein sequence, read N- to C-terminus: Oligoendopeptidase F, chromosomal (602 aa).

Zn(2+) is bound at residue His-388. The active site involves Glu-389. Zn(2+) is bound by residues His-392 and His-395.

It belongs to the peptidase M3B family. Requires Zn(2+) as cofactor.

Hydrolyzes peptides containing between 7 and 17 amino acids with a rather wide specificity. This chain is Oligoendopeptidase F, chromosomal (pepF2), found in Lactococcus lactis subsp. cremoris (Streptococcus cremoris).